Reading from the N-terminus, the 195-residue chain is Rubrerythrin-1 (195 aa).

Positions Ser3 to Lys150 constitute a Ferritin-like diiron domain. Fe(3+)-binding residues include Glu20, Glu53, Glu98, Glu101, Glu132, His135, Cys162, Cys165, Cys178, and Cys181. The Rubredoxin-like domain maps to Val157 to Leu191.

Homodimer. Fe(3+) is required as a cofactor.

It carries out the reaction H2O2 + NADH + H(+) = NAD(+) + 2 H2O. Rubredoxin (Rd) increases the NADH consumption rate by serving as an intermediary electron-transfer shuttle between NROR and RubY. Functionally, functions as the terminal component of an NADH peroxidase (NADH:H(2)O(2) oxidoreductase) when using NADH:rubredoxin oxidoreductase (NROR) as the electron transport intermediary from NADH to RubY. The chain is Rubrerythrin-1 (rbr1) from Clostridium acetobutylicum (strain ATCC 824 / DSM 792 / JCM 1419 / IAM 19013 / LMG 5710 / NBRC 13948 / NRRL B-527 / VKM B-1787 / 2291 / W).